We begin with the raw amino-acid sequence, 143 residues long: Large ribosomal subunit protein uL13 (143 aa).

This sequence belongs to the universal ribosomal protein uL13 family. Part of the 50S ribosomal subunit.

In terms of biological role, this protein is one of the early assembly proteins of the 50S ribosomal subunit, although it is not seen to bind rRNA by itself. It is important during the early stages of 50S assembly. The protein is Large ribosomal subunit protein uL13 of Dehalococcoides mccartyi (strain ATCC BAA-2266 / KCTC 15142 / 195) (Dehalococcoides ethenogenes (strain 195)).